The following is a 132-amino-acid chain: Small ribosomal subunit protein uS8 (132 aa).

Belongs to the universal ribosomal protein uS8 family. Part of the 30S ribosomal subunit. Contacts proteins S5 and S12.

Functionally, one of the primary rRNA binding proteins, it binds directly to 16S rRNA central domain where it helps coordinate assembly of the platform of the 30S subunit. This Bacillus subtilis (strain 168) protein is Small ribosomal subunit protein uS8.